A 735-amino-acid polypeptide reads, in one-letter code: Photosystem I P700 chlorophyll a apoprotein A2 (735 aa).

8 helical membrane passes run L46–A69, L135–Q158, L175–I199, I273–Y291, L333–Y356, A372–I398, A420–H442, and F518–V536. Residues C560 and C569 each contribute to the [4Fe-4S] cluster site. The next 2 membrane-spanning stretches (helical) occupy residues A576 to W597 and L644 to I666. H655, M663, and Y671 together coordinate chlorophyll a. Phylloquinone is bound at residue W672. A helical membrane pass occupies residues V708 to A728.

It belongs to the PsaA/PsaB family. The PsaA/B heterodimer binds the P700 chlorophyll special pair and subsequent electron acceptors. PSI consists of a core antenna complex that captures photons, and an electron transfer chain that converts photonic excitation into a charge separation. The cyanobacterial PSI reaction center is composed of one copy each of PsaA,B,C,D,E,F,I,J,K,L,M and X, and forms trimeric complexes. Requires PSI electron transfer chain: 5 chlorophyll a, 1 chlorophyll a', 2 phylloquinones and 3 4Fe-4S clusters. PSI core antenna: 90 chlorophyll a, 22 carotenoids, 3 phospholipids and 1 galactolipid. P700 is a chlorophyll a/chlorophyll a' dimer, A0 is one or more chlorophyll a, A1 is one or both phylloquinones and FX is a shared 4Fe-4S iron-sulfur center. as cofactor.

It localises to the cellular thylakoid membrane. It carries out the reaction reduced [plastocyanin] + hnu + oxidized [2Fe-2S]-[ferredoxin] = oxidized [plastocyanin] + reduced [2Fe-2S]-[ferredoxin]. PsaA and PsaB bind P700, the primary electron donor of photosystem I (PSI), as well as the electron acceptors A0, A1 and FX. PSI is a plastocyanin/cytochrome c6-ferredoxin oxidoreductase, converting photonic excitation into a charge separation, which transfers an electron from the donor P700 chlorophyll pair to the spectroscopically characterized acceptors A0, A1, FX, FA and FB in turn. Oxidized P700 is reduced on the lumenal side of the thylakoid membrane by plastocyanin or cytochrome c6. This is Photosystem I P700 chlorophyll a apoprotein A2 from Synechococcus sp. (strain CC9902).